We begin with the raw amino-acid sequence, 285 residues long: MTKKIILPSPAKLNLFLYITNKRADGYHELQTLFQFLDFGDDISLEVNESGEIELLNAIEGVAKEQNLIYRAAKLLQNHTACSKGAKIGVTKRLPMGGGVGGGSSNAATVLVGLNHFWQTGLSLEQLAELGLSLGADVPIFVRGFAAFAEGVGEKLVACQPRESWYVVLKPNVSISTAAVFQDPNLPRNTPKRTLSRLLSEEWTNDCEKVVRDHYFEVEDLIAELLQYATFRLTGTGACIFAEFESEAEAKAVFAHKPHNIFGFIAKGQNRSPLHQMLNLTTFPQ.

Lys-12 is a catalytic residue. 95–105 (PMGGGVGGGSS) contributes to the ATP binding site. Asp-137 is an active-site residue.

This sequence belongs to the GHMP kinase family. IspE subfamily.

The catalysed reaction is 4-CDP-2-C-methyl-D-erythritol + ATP = 4-CDP-2-C-methyl-D-erythritol 2-phosphate + ADP + H(+). The protein operates within isoprenoid biosynthesis; isopentenyl diphosphate biosynthesis via DXP pathway; isopentenyl diphosphate from 1-deoxy-D-xylulose 5-phosphate: step 3/6. Functionally, catalyzes the phosphorylation of the position 2 hydroxy group of 4-diphosphocytidyl-2C-methyl-D-erythritol. The chain is 4-diphosphocytidyl-2-C-methyl-D-erythritol kinase from Actinobacillus pleuropneumoniae serotype 3 (strain JL03).